Here is a 319-residue protein sequence, read N- to C-terminus: Lipase 1 (319 aa).

S189 (nucleophile) is an active-site residue. Residues D314 and D317 each contribute to the Ca(2+) site.

The enzyme catalyses a triacylglycerol + H2O = a diacylglycerol + a fatty acid + H(+). The chain is Lipase 1 (lip1) from Moraxella sp. (strain TA144).